Here is a 222-residue protein sequence, read N- to C-terminus: Small ribosomal subunit protein eS1 (222 aa).

Belongs to the eukaryotic ribosomal protein eS1 family.

This chain is Small ribosomal subunit protein eS1, found in Pyrobaculum calidifontis (strain DSM 21063 / JCM 11548 / VA1).